The chain runs to 225 residues: Urease accessory protein UreG 2 (225 aa).

A GTP-binding site is contributed by G31 to T38.

The protein belongs to the SIMIBI class G3E GTPase family. UreG subfamily. As to quaternary structure, homodimer. UreD, UreF and UreG form a complex that acts as a GTP-hydrolysis-dependent molecular chaperone, activating the urease apoprotein by helping to assemble the nickel containing metallocenter of UreC. The UreE protein probably delivers the nickel.

It is found in the cytoplasm. Its function is as follows. Facilitates the functional incorporation of the urease nickel metallocenter. This process requires GTP hydrolysis, probably effectuated by UreG. In Streptomyces griseus subsp. griseus (strain JCM 4626 / CBS 651.72 / NBRC 13350 / KCC S-0626 / ISP 5235), this protein is Urease accessory protein UreG 2.